Here is a 205-residue protein sequence, read N- to C-terminus: Probable inactive peroxygenase-like protein (205 aa).

The Proline-knot motif lies at 79 to 88; the sequence is PVQLFGYILP. Ser183 is modified (phosphoserine).

It belongs to the caleosin family.

The protein resides in the lipid droplet. This is Probable inactive peroxygenase-like protein from Arabidopsis thaliana (Mouse-ear cress).